We begin with the raw amino-acid sequence, 157 residues long: S-ribosylhomocysteine lyase (157 aa).

H54, H58, and C124 together coordinate Fe cation.

It belongs to the LuxS family. As to quaternary structure, homodimer. Fe cation is required as a cofactor.

It carries out the reaction S-(5-deoxy-D-ribos-5-yl)-L-homocysteine = (S)-4,5-dihydroxypentane-2,3-dione + L-homocysteine. Functionally, involved in the synthesis of autoinducer 2 (AI-2) which is secreted by bacteria and is used to communicate both the cell density and the metabolic potential of the environment. The regulation of gene expression in response to changes in cell density is called quorum sensing. Catalyzes the transformation of S-ribosylhomocysteine (RHC) to homocysteine (HC) and 4,5-dihydroxy-2,3-pentadione (DPD). This Lactobacillus acidophilus (strain ATCC 700396 / NCK56 / N2 / NCFM) protein is S-ribosylhomocysteine lyase.